We begin with the raw amino-acid sequence, 508 residues long: Putative glycosyl hydrolase ecdF (508 aa).

The N-terminal stretch at 1–15 is a signal peptide; that stretch reads MFLHILCLLAGQALA. Residues Asn-99, Asn-122, Asn-275, and Asn-362 are each glycosylated (N-linked (GlcNAc...) asparagine).

It belongs to the glycosyl hydrolase 32 family.

In Aspergillus rugulosus (Emericella rugulosa), this protein is Putative glycosyl hydrolase ecdF.